The following is a 369-amino-acid chain: Sesquiterpene cyclase hepA (369 aa).

Mg(2+) contacts are provided by Asp-100, Asn-248, Ser-252, and Asp-256. The short motif at 100–104 is the DDXXD motif element; that stretch reads DDEID. Positions 255-262 match the (N,D)D(L,I,V)X(S,T)XXXE motif motif; it reads NDLLSLRK.

Belongs to the terpene synthase family. Requires Mg(2+) as cofactor.

In terms of biological role, sesquiterpene cyclase; part of the gene cluster that mediates the biosynthesis of heptelidic acid (HA), a sesquiterpene lactone that acts as an inhibitor of glyceraldehyde-3-phosphatedehydrogenase (GAPDH) and a growth inhibitor of the salt-tolerant lactic acid bacteria in soy sauce brewing. This chain is Sesquiterpene cyclase hepA, found in Aspergillus oryzae (strain ATCC 42149 / RIB 40) (Yellow koji mold).